The primary structure comprises 500 residues: NAD(P)H-quinone oxidoreductase chain 4, chloroplastic (500 aa).

Transmembrane regions (helical) follow at residues 4–24 (FYWL…IALL), 35–55 (YTIC…CYHF), 80–100 (LGID…TTLA), 113–130 (LFHF…GSFS), 134–154 (LLLF…LLSM), 167–187 (FILY…GMGL), 208–228 (ALEI…SPII), 242–262 (HYST…YGLV), 274–294 (SIFS…AALT), 305–325 (IAYS…SITD), 330–350 (GAIL…FLAG), 364–384 (MGGI…FSMA), 386–406 (LALP…GIIT), 416–436 (ILIT…SLSM), and 462–482 (IFIF…PDFV).

Belongs to the complex I subunit 4 family.

It is found in the plastid. It localises to the chloroplast thylakoid membrane. It carries out the reaction a plastoquinone + NADH + (n+1) H(+)(in) = a plastoquinol + NAD(+) + n H(+)(out). The catalysed reaction is a plastoquinone + NADPH + (n+1) H(+)(in) = a plastoquinol + NADP(+) + n H(+)(out). This is NAD(P)H-quinone oxidoreductase chain 4, chloroplastic from Nymphaea alba (White water-lily).